We begin with the raw amino-acid sequence, 281 residues long: Penicillin-insensitive murein endopeptidase (281 aa).

Positions 1–24 (MKQGLIGVLALALGATLLSSAVWA) are cleaved as a signal peptide. 3 cysteine pairs are disulfide-bonded: Cys-49–Cys-270, Cys-192–Cys-240, and Cys-221–Cys-228. Zn(2+) contacts are provided by His-115, His-118, Asp-125, and His-216. Residues 230-271 (EQSEPPIGDGCGAELTSWFQPKQPSSEAPEKTTPPPLPPSCQ) are disordered. Positions 246–255 (SWFQPKQPSS) are enriched in polar residues.

Belongs to the peptidase M74 family. Dimer. It depends on Zn(2+) as a cofactor.

The protein resides in the periplasm. Murein endopeptidase that cleaves the D-alanyl-meso-2,6-diamino-pimelyl amide bond that connects peptidoglycan strands. Likely plays a role in the removal of murein from the sacculus. The chain is Penicillin-insensitive murein endopeptidase (mepA) from Pectobacterium atrosepticum (strain SCRI 1043 / ATCC BAA-672) (Erwinia carotovora subsp. atroseptica).